Reading from the N-terminus, the 83-residue chain is Small ribosomal subunit protein bS20 (83 aa).

It belongs to the bacterial ribosomal protein bS20 family.

Its function is as follows. Binds directly to 16S ribosomal RNA. The protein is Small ribosomal subunit protein bS20 of Leuconostoc mesenteroides subsp. mesenteroides (strain ATCC 8293 / DSM 20343 / BCRC 11652 / CCM 1803 / JCM 6124 / NCDO 523 / NBRC 100496 / NCIMB 8023 / NCTC 12954 / NRRL B-1118 / 37Y).